Reading from the N-terminus, the 116-residue chain is Large ribosomal subunit protein uL22 (116 aa).

This sequence belongs to the universal ribosomal protein uL22 family. In terms of assembly, part of the 50S ribosomal subunit.

Its function is as follows. This protein binds specifically to 23S rRNA; its binding is stimulated by other ribosomal proteins, e.g. L4, L17, and L20. It is important during the early stages of 50S assembly. It makes multiple contacts with different domains of the 23S rRNA in the assembled 50S subunit and ribosome. Functionally, the globular domain of the protein is located near the polypeptide exit tunnel on the outside of the subunit, while an extended beta-hairpin is found that lines the wall of the exit tunnel in the center of the 70S ribosome. This is Large ribosomal subunit protein uL22 from Orientia tsutsugamushi (strain Boryong) (Rickettsia tsutsugamushi).